Reading from the N-terminus, the 295-residue chain is Caffeine dehydrogenase subunit beta (295 aa).

The FAD-binding PCMH-type domain occupies Met1 to Gln178. FAD is bound by residues Ala32–Ser36 and Thr111–Asn115.

In terms of assembly, heterotrimer composed of an alpha (CdhA), a beta (CdhB) and a gamma (CdhC) subunit.

The catalysed reaction is caffeine + a ubiquinone + H2O = 1,3,7-trimethylurate + a ubiquinol. The enzyme catalyses ubiquinone-0 + caffeine + H2O = ubiquinol-0 + 1,3,7-trimethylurate. It catalyses the reaction theobromine + a ubiquinone + H2O = 3,7-dimethylurate + a ubiquinol. In terms of biological role, component of the caffeine dehydrogenase complex that catalyzes the hydrolytical oxidation of 1,3,7-trimethylxanthine (caffeine) by incorporation of an oxygen atom originating from a water molecule into position C-8 to produce 1,3,7-trimethyluric acid (TMU). Coenzyme Q0 (ubiquinone-0) is the preferred electron acceptor and, to a lesser extent, coenzyme Q2 (ubiquinone-2) can also be used, but oxygen and NAD(P)(+) cannot. Is involved in a caffeine degradation pathway that allows Pseudomonas sp. strain CBB1 to grow on caffeine as the sole carbon and nitrogen source. Is also active with theobromine as substrate, but shows a very poor activity with theophylline and is not active with xanthine, 3-methylxanthine, 7-methylxanthine, TMU, and 3,7-dimethylurate. The protein is Caffeine dehydrogenase subunit beta of Pseudomonas sp. (strain CBB1).